We begin with the raw amino-acid sequence, 225 residues long: Endonuclease V (225 aa).

Mg(2+) is bound by residues Asp-43 and Asp-110. Interaction with target DNA regions lie at residues Lys-139–Arg-141 and His-214–Lys-221.

Belongs to the endonuclease V family. Requires Mg(2+) as cofactor.

It is found in the cytoplasm. It carries out the reaction Endonucleolytic cleavage at apurinic or apyrimidinic sites to products with a 5'-phosphate.. Its function is as follows. DNA repair enzyme involved in the repair of deaminated bases. Selectively cleaves double-stranded DNA at the second phosphodiester bond 3' to a deoxyinosine leaving behind the intact lesion on the nicked DNA. In vitro, can also cleave single-stranded substrates with inosine, double-stranded DNA with apurinic sites, or DNA sites with uracil or a mismatched base. When present in molar excess, two protein molecules can bind to the same DNA substrate and effect cleavage of both strands (in vitro). In Thermotoga maritima (strain ATCC 43589 / DSM 3109 / JCM 10099 / NBRC 100826 / MSB8), this protein is Endonuclease V.